A 90-amino-acid polypeptide reads, in one-letter code: Small ribosomal subunit protein bS16 (90 aa).

Belongs to the bacterial ribosomal protein bS16 family.

This is Small ribosomal subunit protein bS16 from Lactococcus lactis subsp. lactis (strain IL1403) (Streptococcus lactis).